The primary structure comprises 693 residues: Phosphoribosylformylglycinamidine synthase subunit PurL (693 aa).

H34 is an active-site residue. Residues Y37 and K76 each contribute to the ATP site. E78 contributes to the Mg(2+) binding site. Substrate-binding positions include S79–H82 and R101. H80 (proton acceptor) is an active-site residue. D102 is a Mg(2+) binding site. A substrate-binding site is contributed by Q222. D248 is a binding site for Mg(2+). E292–Q294 provides a ligand contact to substrate. ATP-binding residues include D470 and G507. S510 serves as a coordination point for substrate.

It belongs to the FGAMS family. Monomer. Part of the FGAM synthase complex composed of 1 PurL, 1 PurQ and 2 PurS subunits.

It localises to the cytoplasm. The catalysed reaction is N(2)-formyl-N(1)-(5-phospho-beta-D-ribosyl)glycinamide + L-glutamine + ATP + H2O = 2-formamido-N(1)-(5-O-phospho-beta-D-ribosyl)acetamidine + L-glutamate + ADP + phosphate + H(+). It functions in the pathway purine metabolism; IMP biosynthesis via de novo pathway; 5-amino-1-(5-phospho-D-ribosyl)imidazole from N(2)-formyl-N(1)-(5-phospho-D-ribosyl)glycinamide: step 1/2. Functionally, part of the phosphoribosylformylglycinamidine synthase complex involved in the purines biosynthetic pathway. Catalyzes the ATP-dependent conversion of formylglycinamide ribonucleotide (FGAR) and glutamine to yield formylglycinamidine ribonucleotide (FGAM) and glutamate. The FGAM synthase complex is composed of three subunits. PurQ produces an ammonia molecule by converting glutamine to glutamate. PurL transfers the ammonia molecule to FGAR to form FGAM in an ATP-dependent manner. PurS interacts with PurQ and PurL and is thought to assist in the transfer of the ammonia molecule from PurQ to PurL. This chain is Phosphoribosylformylglycinamidine synthase subunit PurL, found in Pyrobaculum islandicum (strain DSM 4184 / JCM 9189 / GEO3).